Consider the following 104-residue polypeptide: NADH-quinone oxidoreductase subunit K (104 aa).

3 helical membrane-spanning segments follow: residues 7–27 (PDMA…GVLV), 31–51 (LLFM…AFVA), and 63–83 (VMFL…LAIL).

This sequence belongs to the complex I subunit 4L family. NDH-1 is composed of 14 different subunits. Subunits NuoA, H, J, K, L, M, N constitute the membrane sector of the complex.

It localises to the cell inner membrane. The enzyme catalyses a quinone + NADH + 5 H(+)(in) = a quinol + NAD(+) + 4 H(+)(out). In terms of biological role, NDH-1 shuttles electrons from NADH, via FMN and iron-sulfur (Fe-S) centers, to quinones in the respiratory chain. The immediate electron acceptor for the enzyme in this species is believed to be ubiquinone. Couples the redox reaction to proton translocation (for every two electrons transferred, four hydrogen ions are translocated across the cytoplasmic membrane), and thus conserves the redox energy in a proton gradient. This chain is NADH-quinone oxidoreductase subunit K, found in Gluconacetobacter diazotrophicus (strain ATCC 49037 / DSM 5601 / CCUG 37298 / CIP 103539 / LMG 7603 / PAl5).